A 283-amino-acid polypeptide reads, in one-letter code: uncharacterized protein (283 aa).

Catalysis depends on Tyr-55, which acts as the Proton donor.

This sequence belongs to the aldo/keto reductase family.

It is found in the cytoplasm. It localises to the nucleus. This is an uncharacterized protein from Schizosaccharomyces pombe (strain 972 / ATCC 24843) (Fission yeast).